We begin with the raw amino-acid sequence, 140 residues long: MALERTFSMIKPDATRRNLTGAITKMLEDAGLRVIASRRVWMSRREAEGFYAVHKDRPFFGELVEFMSSAPTIVQVLEGENAIARNREVMGATNPANAAEGTIRKVHALSIGENSVHGSDAPETAAQEIKYWFSDTEIVG.

Positions 11, 59, 87, 93, 104, and 114 each coordinate ATP. Histidine 117 (pros-phosphohistidine intermediate) is an active-site residue.

This sequence belongs to the NDK family. As to quaternary structure, homotetramer. Mg(2+) is required as a cofactor.

It localises to the cytoplasm. It catalyses the reaction a 2'-deoxyribonucleoside 5'-diphosphate + ATP = a 2'-deoxyribonucleoside 5'-triphosphate + ADP. The enzyme catalyses a ribonucleoside 5'-diphosphate + ATP = a ribonucleoside 5'-triphosphate + ADP. Its function is as follows. Major role in the synthesis of nucleoside triphosphates other than ATP. The ATP gamma phosphate is transferred to the NDP beta phosphate via a ping-pong mechanism, using a phosphorylated active-site intermediate. The protein is Nucleoside diphosphate kinase of Mesorhizobium japonicum (strain LMG 29417 / CECT 9101 / MAFF 303099) (Mesorhizobium loti (strain MAFF 303099)).